We begin with the raw amino-acid sequence, 280 residues long: Probable endonuclease 4 (280 aa).

His-69, His-109, Glu-145, Asp-179, His-182, His-216, Asp-229, His-231, and Glu-261 together coordinate Zn(2+).

It belongs to the AP endonuclease 2 family. Zn(2+) serves as cofactor.

It carries out the reaction Endonucleolytic cleavage to 5'-phosphooligonucleotide end-products.. In terms of biological role, endonuclease IV plays a role in DNA repair. It cleaves phosphodiester bonds at apurinic or apyrimidinic (AP) sites, generating a 3'-hydroxyl group and a 5'-terminal sugar phosphate. This Erwinia tasmaniensis (strain DSM 17950 / CFBP 7177 / CIP 109463 / NCPPB 4357 / Et1/99) protein is Probable endonuclease 4.